The chain runs to 827 residues: Cell surface glycoprotein (827 aa).

Positions M1–A34 are cleaved as a signal peptide. An N-linked (Glc...) asparagine glycan is attached at N47. Over residues P73–L102 the composition is skewed to polar residues. Residues P73 to G111 are disordered. N117, N308, N313, N532, and N766 each carry an N-linked (Glc...) asparagine glycan. Residues S755–P804 are disordered. Positions T761 to T787 are enriched in low complexity. Residues P804 to F806 carry the PGF sorting signal motif. A helical membrane pass occupies residues P804–L823.

Belongs to the halobacterial S-layer protein family. O-glycosylated on 4 to 6 threonine residues; glycans consist of Glc-Gal disaccharides. Post-translationally, the N-terminus is not blocked. In terms of processing, cleaved by the archaeosortase ArtA at the C-terminus, with removal of a short hydrophobic segment. Lipidation: Following protein translocation across the membrane, the protein is modified by a derivative of mevalonic acid. Lipid modification is ArtA-dependent and requires the conserved C-terminal PGF motif. Post-translationally, asn-47 and Asn-117 are glycosylated by a pentasaccharide comprising a hexose, 2 hexuronic acids, a methyl ester of a hexuronic acid and mannose. The pentasaccharide is produced in 2 steps: first, a tetrasaccharide is built on dolichol-P and then transferred to the S-layer glycoprotein. Then, the mannose fifth sugar is attached to a distinct molecule of dolichol-P and is transferred to the protein already carrying the tetrasaccharide. The pentasaccharide on Asn-47 was initially thought to contain mannose, galactose, glucose and idose with a relative ratio of 1/3/3/0.2. However, it was later shown that it is not the case. Under low-salt conditions (1.75 M instead of 3.4 M), a tetrasaccharide consisting of a sulfated hexose, 2 hexoses and rhamnose is attached to Asn-532.

The protein resides in the secreted. It is found in the cell wall. The protein localises to the S-layer. It localises to the cell membrane. S-layer protein. The S-layer is a paracrystalline mono-layered assembly of proteins which coat the surface of the cell. This chain is Cell surface glycoprotein (csg), found in Haloferax volcanii (strain ATCC 29605 / DSM 3757 / JCM 8879 / NBRC 14742 / NCIMB 2012 / VKM B-1768 / DS2) (Halobacterium volcanii).